A 437-amino-acid chain; its full sequence is 23S rRNA (uracil(1939)-C(5))-methyltransferase RlmD (437 aa).

The 59-residue stretch at 10 to 68 folds into the TRAM domain; it reads SAPRNTTFVAEILDLDYQGRGVAKVQGKTWFIENALPQEKVEVRIVDEKRHYGHGISCK. Residues C81, C87, C90, and C167 each contribute to the [4Fe-4S] cluster site. Residues Q270, F299, N304, E320, N347, and D368 each coordinate S-adenosyl-L-methionine. The Nucleophile role is filled by C394.

Belongs to the class I-like SAM-binding methyltransferase superfamily. RNA M5U methyltransferase family. RlmD subfamily.

The catalysed reaction is uridine(1939) in 23S rRNA + S-adenosyl-L-methionine = 5-methyluridine(1939) in 23S rRNA + S-adenosyl-L-homocysteine + H(+). Its function is as follows. Catalyzes the formation of 5-methyl-uridine at position 1939 (m5U1939) in 23S rRNA. In Pasteurella multocida (strain Pm70), this protein is 23S rRNA (uracil(1939)-C(5))-methyltransferase RlmD.